The sequence spans 457 residues: Streptogrisin-C (457 aa).

Positions 1-34 form a signal peptide, tat-type signal; sequence MERTTLRRRALVAGTATVAVGALALAGLTGVASA. The propeptide occupies 35-202; sequence DPAATAAPPV…ARSAEQPRAL (168 aa). The catalytic stretch occupies residues 203 to 393; the sequence is ADIRGGDAYY…QAYGLTLVTS (191 aa). A disulfide bridge links C219 with C239. Residues H238 and D266 each act as charge relay system in the active site. Disulfide bonds link C305–C315 and C341–C368. Catalysis depends on S347, which acts as the Charge relay system. Positions 393–412 are disordered; sequence SGGGTPTDPPTTPPTDSPGG. The linker stretch occupies residues 394–413; it reads GGGTPTDPPTTPPTDSPGGT. Pro residues predominate over residues 399-408; it reads TDPPTTPPTD. In terms of domain architecture, Chitin-binding type-3 spans 415–457; that stretch reads AVGTAYAAGATVTYGGATYRCLQAHTAQPGWTPADVPALWQRV.

The protein belongs to the peptidase S1 family. Monomer. Predicted to be exported by the Tat system. The position of the signal peptide cleavage has not been experimentally proven.

Its function is as follows. Hydrolysis of proteins with specificity similar to chymotrypsin. May be specialized for the degradation of chitin-linked proteins. Has a primary specificity for large aliphatic or aromatic amino acids. This chain is Streptogrisin-C (sprC), found in Streptomyces griseus.